The primary structure comprises 219 residues: tRNA (guanine-N(7)-)-methyltransferase (219 aa).

E43, D68, E101, and N124 together coordinate S-adenosyl-L-methionine. Residues K128 and D160 each coordinate substrate.

It belongs to the class I-like SAM-binding methyltransferase superfamily. TrmB family.

The catalysed reaction is guanosine(46) in tRNA + S-adenosyl-L-methionine = N(7)-methylguanosine(46) in tRNA + S-adenosyl-L-homocysteine. It functions in the pathway tRNA modification; N(7)-methylguanine-tRNA biosynthesis. Catalyzes the formation of N(7)-methylguanine at position 46 (m7G46) in tRNA. The chain is tRNA (guanine-N(7)-)-methyltransferase from Clostridium botulinum (strain Alaska E43 / Type E3).